The sequence spans 450 residues: MSDRDSQNDLGAKVFVLVTGANSGLGFSICCRLVDEFLKSHRHPRESLTVIFTTRSTRKGNDTLLRLQDHLRRASASASAPAAASARVTFVAENVDLSNLVSVRALSRRLNKTFPKLDAIVLNAGLGGWTGINWPKAIWGVMTDLVHEVSWPSFKIAPAGMVTDAQTALGDDKEPRLGAVFCANVFGHYMLAHNAMPLLRHSDMLHGPGRIIWVSSLEATVKHLDIDDIQGLRTLAPYESSKALTDILALTADLPSTAPWVKSFYSVDEQPEPRKETELEPPHPNMFLTHPGICGTGILPLSWPLFYSMLAAFWLARLLGSPWHTISTYAGACAPVWLALSAQAVLDDAEAPYRRNGGGRVKWGSSCNRLGQDQPVCTEVDGWGYGGVVGPAILEGDRRRRRKRGAVDLTAEEKLQYEDLGRKCWQRMEELRIQWDELLDEAEAQAKSEA.

Positions 25, 53, and 59 each coordinate NADP(+). Catalysis depends on proton donor residues Ser-215 and Tyr-238. Residues Tyr-238, Lys-242, and Thr-296 each contribute to the NADP(+) site. Catalysis depends on Lys-242, which acts as the Lowers pKa of active site Tyr.

It belongs to the short-chain dehydrogenases/reductases (SDR) family. ERG27 subfamily. Heterotetramer of erg25, erg26, erg27 and erg28. Erg28 acts as a scaffold to tether erg27 and other 4,4-demethylation-related enzymes, forming a demethylation enzyme complex, in the endoplasmic reticulum.

The protein localises to the endoplasmic reticulum membrane. Its subcellular location is the lipid droplet. It participates in steroid metabolism; ergosterol biosynthesis. In terms of biological role, sterol-C4-methyl oxidase; part of the third module of ergosterol biosynthesis pathway that includes the late steps of the pathway. Erg27 is a catalytic component of the C-4 demethylation complex that catalyzes the conversion of 4,4-dimethylfecosterol into fecosterol via 4-methylfecosterol. The third module or late pathway involves the ergosterol synthesis itself through consecutive reactions that mainly occur in the endoplasmic reticulum (ER) membrane. Firstly, the squalene synthase erg9 catalyzes the condensation of 2 farnesyl pyrophosphate moieties to form squalene, which is the precursor of all steroids. Squalene synthase is crucial for balancing the incorporation of farnesyl diphosphate (FPP) into sterol and nonsterol isoprene synthesis. Secondly, squalene is converted into lanosterol by the consecutive action of the squalene epoxidase erg1 and the lanosterol synthase erg7. Then, the delta(24)-sterol C-methyltransferase erg6 methylates lanosterol at C-24 to produce eburicol. Eburicol is the substrate of the sterol 14-alpha demethylase encoded by cyp51A and cyp51B, to yield 4,4,24-trimethyl ergosta-8,14,24(28)-trienol. The C-14 reductase erg24 then reduces the C14=C15 double bond which leads to 4,4-dimethylfecosterol. A sequence of further demethylations at C-4, involving the C-4 demethylation complex containing the C-4 methylsterol oxidases erg25A or erg25B, the sterol-4-alpha-carboxylate 3-dehydrogenase erg26 and the 3-keto-steroid reductase erg27, leads to the production of fecosterol via 4-methylfecosterol. The C-8 sterol isomerase erg2 then catalyzes the reaction which results in unsaturation at C-7 in the B ring of sterols and thus converts fecosterol to episterol. The sterol-C5-desaturase erg3B then catalyzes the introduction of a C-5 double bond in the B ring to produce 5-dehydroepisterol. The 2 other sterol-C5-desaturases, erg3A and erg3C, seem to be less important in ergosterol biosynthesis. The C-22 sterol desaturase erg5 further converts 5-dehydroepisterol into ergosta-5,7,22,24(28)-tetraen-3beta-ol by forming the C-22(23) double bond in the sterol side chain. Finally, ergosta-5,7,22,24(28)-tetraen-3beta-ol is substrate of the C-24(28) sterol reductases erg4A and erg4B to produce ergosterol. Possible alternative sterol biosynthetic pathways might exist from fecosterol to ergosterol, depending on the activities of the erg3 isoforms. This is 3-keto-steroid reductase erg27 from Aspergillus fumigatus (strain ATCC MYA-4609 / CBS 101355 / FGSC A1100 / Af293) (Neosartorya fumigata).